Reading from the N-terminus, the 1278-residue chain is ABC transporter B family member 11 (1278 aa).

2 stretches are compositionally biased toward basic and acidic residues: residues 1-13 (MNGD…DSVS) and 21-35 (SPKE…EKSE). Residues 1 to 35 (MNGDGAREGDSVSHEPSTSKSPKEGEETKKEEKSE) are disordered. 6 consecutive transmembrane segments (helical) span residues 55-75 (VLLM…LPFM), 106-126 (FVYL…CWMI), 182-202 (FIQL…KGWL), 205-225 (LVML…ALIV), 285-305 (GLGL…AIWF), and 314-334 (GYTG…SMSL). The ABC transmembrane type-1 1 domain occupies 58–346 (MICGSIGAIG…TSPCVTAFAA (289 aa)). The ABC transporter 1 domain occupies 381–617 (IELKDVHFSY…SEGAYSQLIR (237 aa)). 416 to 423 (GESGSGKS) provides a ligand contact to ATP. 3 N-linked (GlcNAc...) asparagine glycosylation sites follow: Asn483, Asn568, and Asn653. Positions 629 to 654 (ELSSGSSFRNSNLKKSMEGTSSVGNS) are enriched in polar residues. The tract at residues 629–656 (ELSSGSSFRNSNLKKSMEGTSSVGNSSR) is disordered. The ABC transmembrane type-1 2 domain occupies 710-997 (LLLGTVAAAI…SSTFAPDSSK (288 aa)). 2 helical membrane passes run 711–731 (LLGT…GILI) and 751–771 (FWAI…PTQM). N-linked (GlcNAc...) asparagine glycosylation is present at Asn806. 4 consecutive transmembrane segments (helical) span residues 824-844 (ALVG…ASGL), 845-865 (IIAF…LPLI), 932-952 (GFIS…VYAT), and 971-991 (VFQV…SSTF). The ABC transporter 2 domain maps to 1032-1271 (IELRHLSFTY…EGGVYASLVQ (240 aa)). ATP is bound at residue 1067-1074 (GESGSGKS). Asn1121 and Asn1222 each carry an N-linked (GlcNAc...) asparagine glycan.

Belongs to the ABC transporter superfamily. ABCB family. Multidrug resistance exporter (TC 3.A.1.201) subfamily. In terms of tissue distribution, present in roots and flower buds.

It localises to the membrane. It catalyses the reaction (indol-3-yl)acetate(in) + ATP + H2O = (indol-3-yl)acetate(out) + ADP + phosphate + H(+). Involved in the regulation of auxin transport required for pistil elongation. This chain is ABC transporter B family member 11, found in Arabidopsis thaliana (Mouse-ear cress).